The sequence spans 2604 residues: Probable polyketide synthase 17 (2604 aa).

Positions 11–433 (NDDIAIIGMG…GSNCHMILSE (423 aa)) constitute a Ketosynthase family 3 (KS3) domain. Residues Cys-179, His-316, and His-356 each act as for beta-ketoacyl synthase activity in the active site. Residues 631–664 (GISPSIVVGHSFGEIPSALFSDVISLETAVKIVY) form an acyl/malonyl transferases region. The active-site For acyl/malonyl transferase activity is the Ser-641. The tract at residues 937 to 1057 (NNLLGHDQFA…GRIGLFKHNP (121 aa)) is N-terminal hotdog fold. One can recognise a PKS/mFAS DH domain in the interval 937–1216 (NNLLGHDQFA…CTSLIRLKKQ (280 aa)). The Proton acceptor; for dehydratase activity role is filled by His-968. The segment at 1072 to 1216 (SFTTLTKSEV…CTSLIRLKKQ (145 aa)) is C-terminal hotdog fold. The active-site Proton donor; for dehydratase activity is the Asp-1132. A disordered region spans residues 1357–1407 (GESEHFSPSNPSSPNDTPRNNSNNCSSKNNAASSDDADDDTNNEETINQLN). Over residues 1363–1390 (SPSNPSSPNDTPRNNSNNCSSKNNAASS) the composition is skewed to low complexity. Residues 2507–2584 (GDSGSTQAKV…SIIQRISSKS (78 aa)) enclose the Carrier domain. An O-(pantetheine 4'-phosphoryl)serine modification is found at Ser-2544. The segment covering 2581–2597 (SSKSTSTSTPNPTNTSK) has biased composition (low complexity). The tract at residues 2581–2604 (SSKSTSTSTPNPTNTSKQTATKKT) is disordered.

Pantetheine 4'-phosphate serves as cofactor.

Probable polyketide synthase. The sequence is that of Probable polyketide synthase 17 (pks17) from Dictyostelium discoideum (Social amoeba).